Here is a 324-residue protein sequence, read N- to C-terminus: Glyoxylate/hydroxypyruvate reductase B (324 aa).

Active-site residues include Arg-237 and Glu-266. His-285 (proton donor) is an active-site residue.

It belongs to the D-isomer specific 2-hydroxyacid dehydrogenase family. GhrB subfamily. As to quaternary structure, homodimer.

It is found in the cytoplasm. The catalysed reaction is glycolate + NADP(+) = glyoxylate + NADPH + H(+). The enzyme catalyses (R)-glycerate + NAD(+) = 3-hydroxypyruvate + NADH + H(+). It catalyses the reaction (R)-glycerate + NADP(+) = 3-hydroxypyruvate + NADPH + H(+). In terms of biological role, catalyzes the NADPH-dependent reduction of glyoxylate and hydroxypyruvate into glycolate and glycerate, respectively. The protein is Glyoxylate/hydroxypyruvate reductase B of Escherichia coli O6:H1 (strain CFT073 / ATCC 700928 / UPEC).